The primary structure comprises 404 residues: MVENIQTEADAFGFFGNYGGQYVPETLMPAIQELKQAYQDAKNDPQFQIELDDYLKDYVGRETPLTYAKSYSELLGGAKIYLKREDLNHTGAHKINNALGQALLAKRMGKNKLVAETGAGQHGVASATVAALFDMELVVFMGEEDIKRQSLNVFRMELLGAKVESVTEGQGTLSDAVNKALQYWVSHVDDTHYLLGSALGPDPFPTIVRDFQKIIGQEIKAQVHEKEGQLPDAIVACVGGGSNAIGTFYPFVKDDVKLYGVEAAGDGIDSDKHALAINKGKEGVLHGTKMYLIQDDDGQIQLAHSISAGLDYPGVGPEHSYYHDIGRVKYATASDKQAMDALVRFTKAEGIIPAIESAHALSYVETLAPTMRNDEILVVTVSGRGDKDMETIRNYMKQEGDTHA.

N6-(pyridoxal phosphate)lysine is present on Lys-94.

The protein belongs to the TrpB family. As to quaternary structure, tetramer of two alpha and two beta chains. Pyridoxal 5'-phosphate serves as cofactor.

It carries out the reaction (1S,2R)-1-C-(indol-3-yl)glycerol 3-phosphate + L-serine = D-glyceraldehyde 3-phosphate + L-tryptophan + H2O. The protein operates within amino-acid biosynthesis; L-tryptophan biosynthesis; L-tryptophan from chorismate: step 5/5. Functionally, the beta subunit is responsible for the synthesis of L-tryptophan from indole and L-serine. This Staphylococcus saprophyticus subsp. saprophyticus (strain ATCC 15305 / DSM 20229 / NCIMB 8711 / NCTC 7292 / S-41) protein is Tryptophan synthase beta chain.